Consider the following 175-residue polypeptide: Translation initiation factor IF-3 (175 aa).

It belongs to the IF-3 family. In terms of assembly, monomer.

The protein resides in the cytoplasm. IF-3 binds to the 30S ribosomal subunit and shifts the equilibrium between 70S ribosomes and their 50S and 30S subunits in favor of the free subunits, thus enhancing the availability of 30S subunits on which protein synthesis initiation begins. This chain is Translation initiation factor IF-3, found in Staphylococcus epidermidis (strain ATCC 35984 / DSM 28319 / BCRC 17069 / CCUG 31568 / BM 3577 / RP62A).